The primary structure comprises 623 residues: AM-toxin biosynthesis protein 12-2 (623 aa).

Residues 110–129 are disordered; that stretch reads TIPGTSQAKNTEPDHQASGL.

It functions in the pathway mycotoxin biosynthesis. Part of the gene clusters that mediate the biosynthesis of AM-toxins, host-selective toxins (HSTs) causing Alternaria blotch on apple, a worldwide distributed disease. AM-toxins are cyclic depsipeptides containing the 3 residues 2-hydroxy-isovaleric acid (2-HIV), dehydroalanine, L-alanine which are common for all 3 AM-toxins I to III. The fourth precursor is L-alpha-amino-methoxyphenyl-valeric acid (L-Amv) for AM-toxin I, L-alpha-amino-phenyl-valeric acid (L-Apv) for AM-toxin II, and L-alpha-amino-hydroxyphenyl-valeric acid (L-Ahv) for AM-toxin III. AM-toxins have two target sites for affecting susceptible apple cells; they cause invagination of the plasma membrane and electrolyte loss and chloroplast disorganization. The non-ribosomal peptide synthetase AMT1 contains 4 catalytic modules and is responsible for activation of each residue in AM-toxin. The aldo-keto reductase AMT2 catalyzes the conversion of 2-keto-isovaleric acid (2-KIV) to 2-hydroxy-isovaleric acid (2-HIV), one of the precursor residues incorporated by AMT1 during AM-toxin biosynthesis, by reduction of its ketone to an alcohol. The cytochrome P450 monooxygenase AMT3 and the thioesterase AMT4 are also important for AM-toxin production, but their exact function within the AM-toxin biosynthesis are not known yet. Up to 21 proteins (including AMT1 to AMT4) are predicted to be involved in AM-toxin biosynthesis since their expression ishighly up-regulated in AM-toxin-producing cultures. The protein is AM-toxin biosynthesis protein 12-2 of Alternaria alternata (Alternaria rot fungus).